The following is a 269-amino-acid chain: Nuclear egress protein 2 (269 aa).

Topologically, residues Met-1–Asn-247 are perinuclear space. The helical transmembrane segment at Val-248–Trp-268 threads the bilayer. Lys-269 is a topological domain (nuclear).

This sequence belongs to the herpesviridae NEC2 protein family. Forms a heterohexameric complex with NEC1. Post-translationally, phosphorylated.

It is found in the host nucleus inner membrane. In terms of biological role, plays an essential role in virion nuclear egress, the first step of virion release from infected cell. Within the host nucleus, NEC1 interacts with the newly formed capsid through the vertexes and directs it to the inner nuclear membrane by associating with NEC2. Induces the budding of the capsid at the inner nuclear membrane as well as its envelopment into the perinuclear space. There, the NEC1/NEC2 complex promotes the fusion of the enveloped capsid with the outer nuclear membrane and the subsequent release of the viral capsid into the cytoplasm where it will reach the secondary budding sites in the host Golgi or trans-Golgi network. This Homo sapiens (Human) protein is Nuclear egress protein 2.